The primary structure comprises 216 residues: UPF0502 protein VPA1223 (216 aa).

The protein belongs to the UPF0502 family.

The polypeptide is UPF0502 protein VPA1223 (Vibrio parahaemolyticus serotype O3:K6 (strain RIMD 2210633)).